A 471-amino-acid polypeptide reads, in one-letter code: Proline and serine-rich protein 2 (471 aa).

2 disordered regions span residues 1–46 (MPGN…SFTM) and 82–247 (CDSG…GDHV). A compositionally biased stretch (low complexity) spans 26 to 43 (LSRGGSLESRCSSSRSRS). Residue serine 43 is modified to Phosphoserine. Position 45 is a phosphothreonine (threonine 45). Positions 90 to 101 (SPQSLEESPSSH) are enriched in low complexity. The span at 154 to 177 (LPPPDSRGPEVFPLPPSLPVPAPS) shows a compositional bias: pro residues. Phosphoserine occurs at positions 187, 220, and 223. At arginine 263 the chain carries Asymmetric dimethylarginine; alternate. Residue arginine 263 is modified to Omega-N-methylarginine; alternate. 2 disordered regions span residues 310-365 (DTSS…TEQP) and 383-437 (PSSF…RAVG). The span at 313 to 324 (SEERWQKAEEQR) shows a compositional bias: basic and acidic residues. Composition is skewed to polar residues over residues 354 to 364 (AQQSRAVQTEQ) and 383 to 393 (PSSFVPTSKTI). Positions 415–427 (YEPRPDGSQDARK) are enriched in basic and acidic residues. Position 431 is a phosphoserine (serine 431). An Omega-N-methylarginine modification is found at arginine 450.

The chain is Proline and serine-rich protein 2 (Proser2) from Mus musculus (Mouse).